The sequence spans 378 residues: Tyrosinase-like protein phomQ1' (378 aa).

Residues 42–62 (TIIVVSVITFAAIIGCWVFLS) traverse the membrane as a helical segment. Cu cation-binding residues include His-130 and His-139. N-linked (GlcNAc...) asparagine glycosylation is present at Asn-209. 2 residues coordinate Cu cation: His-279 and His-305.

Belongs to the tyrosinase family. Cu(2+) serves as cofactor.

It is found in the membrane. It functions in the pathway mycotoxin biosynthesis. Its function is as follows. Tyrosinase-like protein; part of the gene cluster that mediates the biosynthesis of the phomopsins, a group of hexapeptide mycotoxins which infects lupins and causes lupinosis disease in livestock. The pathway starts with the processing of the precursor phomA' by several endopeptidases including kexin proteases as well as the cluster-specific S41 family peptidase phomP1 and the oligopeptidase phomG' to produce 10 identical copies of the hexapeptide Tyr-Val-Ile-Pro-Ile-Asp. After being excised from the precursor peptide, the core peptides are cyclized and modified post-translationally by enzymes encoded within the gene cluster. The timing and order of proteolysis of the phomA' precursor and PTMs are still unknown. Two tyrosinase-like enzymes, phomQ1' and phomQ2, catalyze the chlorination and hydroxylation of Tyr, respectively. PhomYb, is proposed to be involved in the construction of the macrocyclic structure. The other 4 ustYa family proteins may be involved in PTMs that generate the unique structure of phomopsin A. PhomYa' is required for the hydroxylation of C-beta of Tyr. PhomYc', phomYd', and phomYe are responsible for the biosynthesis of 2,3-dehydroisoleucine (dIle), 2,3-dehydroaspartic acid (dAsp), and 3,4-dehydroproline (dPro), respectively. While dIle formation by phomYc' is indispensable for the installation of dAsp by phomYd', the order of the other PTMs have not been elucidated yet. Most of the biosynthetic enzymes likely have broad substrate specificity, and thus, there might be a metabolic grid from a precursor to phomopsin A. The enzyme(s) responsible for the biosynthesis of 3,4-dehydrovaline (dVal) have also not been identified yet. Finally, phomM' acts as an S-adenosylmethionine-dependent alpha-N-methyltransferase that catalyzes two successive N-methylation reactions, converting N-desmethyl-phomopsin A to phomopsin A and phomopsin A further to an N,N-dimethylated congener called phomopsin E. This chain is Tyrosinase-like protein phomQ1', found in Diaporthe leptostromiformis (Lupinosis disease fungus).